The chain runs to 202 residues: Urease accessory protein UreG (202 aa).

13–20 (GPVGAGKT) contacts GTP.

It belongs to the SIMIBI class G3E GTPase family. UreG subfamily. As to quaternary structure, homodimer. UreD, UreF and UreG form a complex that acts as a GTP-hydrolysis-dependent molecular chaperone, activating the urease apoprotein by helping to assemble the nickel containing metallocenter of UreC. The UreE protein probably delivers the nickel.

Its subcellular location is the cytoplasm. Functionally, facilitates the functional incorporation of the urease nickel metallocenter. This process requires GTP hydrolysis, probably effectuated by UreG. In Dinoroseobacter shibae (strain DSM 16493 / NCIMB 14021 / DFL 12), this protein is Urease accessory protein UreG.